Consider the following 416-residue polypeptide: Phosphoribosylamine--glycine ligase (416 aa).

In terms of domain architecture, ATP-grasp spans 107-303 (KDVMACAGVP…LAGLLMAAAT (197 aa)). 133 to 184 (LAAFGAPYVVKDDGLAAGKGVVVTDDVEAARAHANACDRVVVEEFLDGPEVS) contacts ATP. Positions 273 and 275 each coordinate Mg(2+).

This sequence belongs to the GARS family. It depends on Mg(2+) as a cofactor. Mn(2+) is required as a cofactor.

The enzyme catalyses 5-phospho-beta-D-ribosylamine + glycine + ATP = N(1)-(5-phospho-beta-D-ribosyl)glycinamide + ADP + phosphate + H(+). It functions in the pathway purine metabolism; IMP biosynthesis via de novo pathway; N(1)-(5-phospho-D-ribosyl)glycinamide from 5-phospho-alpha-D-ribose 1-diphosphate: step 2/2. In Streptomyces coelicolor (strain ATCC BAA-471 / A3(2) / M145), this protein is Phosphoribosylamine--glycine ligase.